The following is a 395-amino-acid chain: Elongation factor Tu (395 aa).

The 195-residue stretch at 10-204 (KPHVNIGTIG…EVDAYIPTPE (195 aa)) folds into the tr-type G domain. The segment at 19-26 (GHVDHGKT) is G1. GTP is bound at residue 19-26 (GHVDHGKT). T26 contacts Mg(2+). The segment at 60 to 64 (GITIS) is G2. The interval 81–84 (DCPG) is G3. Residues 81–85 (DCPGH) and 136–139 (NKCD) contribute to the GTP site. A G4 region spans residues 136-139 (NKCD). A G5 region spans residues 174-176 (SAL).

It belongs to the TRAFAC class translation factor GTPase superfamily. Classic translation factor GTPase family. EF-Tu/EF-1A subfamily. In terms of assembly, monomer.

The protein localises to the cytoplasm. The enzyme catalyses GTP + H2O = GDP + phosphate + H(+). GTP hydrolase that promotes the GTP-dependent binding of aminoacyl-tRNA to the A-site of ribosomes during protein biosynthesis. The protein is Elongation factor Tu of Bacillus cereus (strain G9842).